Reading from the N-terminus, the 574-residue chain is Ribonuclease Y (574 aa).

Residues 1–21 traverse the membrane as a helical segment; it reads MSLLDLVLLLLVLGLGGVLLL. Residues 264-327 form the KH domain; that stretch reads AVTVVPIPSD…EIARMALEEL (64 aa). The HD domain maps to 390 to 483; the sequence is VLKHSIQVAH…VAAADALSAA (94 aa).

This sequence belongs to the RNase Y family.

The protein localises to the cell membrane. Its function is as follows. Endoribonuclease that initiates mRNA decay. The sequence is that of Ribonuclease Y from Thermus thermophilus (strain ATCC BAA-163 / DSM 7039 / HB27).